Here is a 372-residue protein sequence, read N- to C-terminus: Queuine tRNA-ribosyltransferase (372 aa).

Aspartate 92 acts as the Proton acceptor in catalysis. Substrate-binding positions include 92–96, aspartate 146, glutamine 188, and glycine 215; that span reads DSGGY. An RNA binding region spans residues 246-252; sequence GIGSLKE. Aspartate 265 acts as the Nucleophile in catalysis. The RNA binding; important for wobble base 34 recognition stretch occupies residues 270-274; sequence TRLGR. Residues cysteine 303, cysteine 305, cysteine 308, and histidine 334 each contribute to the Zn(2+) site.

The protein belongs to the queuine tRNA-ribosyltransferase family. As to quaternary structure, homodimer. Within each dimer, one monomer is responsible for RNA recognition and catalysis, while the other monomer binds to the replacement base PreQ1. The cofactor is Zn(2+).

It carries out the reaction 7-aminomethyl-7-carbaguanine + guanosine(34) in tRNA = 7-aminomethyl-7-carbaguanosine(34) in tRNA + guanine. It functions in the pathway tRNA modification; tRNA-queuosine biosynthesis. In terms of biological role, catalyzes the base-exchange of a guanine (G) residue with the queuine precursor 7-aminomethyl-7-deazaguanine (PreQ1) at position 34 (anticodon wobble position) in tRNAs with GU(N) anticodons (tRNA-Asp, -Asn, -His and -Tyr). Catalysis occurs through a double-displacement mechanism. The nucleophile active site attacks the C1' of nucleotide 34 to detach the guanine base from the RNA, forming a covalent enzyme-RNA intermediate. The proton acceptor active site deprotonates the incoming PreQ1, allowing a nucleophilic attack on the C1' of the ribose to form the product. After dissociation, two additional enzymatic reactions on the tRNA convert PreQ1 to queuine (Q), resulting in the hypermodified nucleoside queuosine (7-(((4,5-cis-dihydroxy-2-cyclopenten-1-yl)amino)methyl)-7-deazaguanosine). In Prochlorococcus marinus (strain MIT 9515), this protein is Queuine tRNA-ribosyltransferase.